The chain runs to 208 residues: Imidazoleglycerol-phosphate dehydratase (208 aa).

It belongs to the imidazoleglycerol-phosphate dehydratase family.

The protein localises to the cytoplasm. The catalysed reaction is D-erythro-1-(imidazol-4-yl)glycerol 3-phosphate = 3-(imidazol-4-yl)-2-oxopropyl phosphate + H2O. Its pathway is amino-acid biosynthesis; L-histidine biosynthesis; L-histidine from 5-phospho-alpha-D-ribose 1-diphosphate: step 6/9. The protein is Imidazoleglycerol-phosphate dehydratase of Hyphomonas neptunium (strain ATCC 15444).